A 200-amino-acid chain; its full sequence is Anthranilate synthase component 2, pyocyanine specific (200 aa).

The 194-residue stretch at arginine 2–arginine 195 folds into the Glutamine amidotransferase type-1 domain. An L-glutamine-binding site is contributed by glycine 56 to glycine 58. Cysteine 83 acts as the Nucleophile; for GATase activity in catalysis. Residues glutamine 87 and serine 133–leucine 134 contribute to the L-glutamine site. Active-site for GATase activity residues include histidine 169 and glutamate 171.

As to quaternary structure, heterotetramer consisting of two non-identical subunits: a beta subunit (PhnB) and a large alpha subunit (PhnA).

It catalyses the reaction chorismate + L-glutamine = anthranilate + pyruvate + L-glutamate + H(+). The protein operates within secondary metabolite biosynthesis; pyocyanine biosynthesis. Its function is as follows. Part of a heterotetrameric complex that catalyzes the two-step biosynthesis of anthranilate, a precursor for Pseudomonas quinolone signal (2-heptyl-3-hydroxy-4-quinolone; PQS) production which is required to induce the genes for the biosynthesis of the virulence factor pyocyanine (PCN), a characteristic blue-green phenazine pigment produced by P.aeruginosa. In the first step, the glutamine-binding beta subunit (PhnB) of anthranilate synthase (AS) provides the glutamine amidotransferase activity which generates ammonia as a substrate that, along with chorismate, is used in the second step, catalyzed by the large alpha subunit of AS (PhnA) to produce anthranilate. This is Anthranilate synthase component 2, pyocyanine specific from Pseudomonas aeruginosa (strain ATCC 15692 / DSM 22644 / CIP 104116 / JCM 14847 / LMG 12228 / 1C / PRS 101 / PAO1).